Reading from the N-terminus, the 688-residue chain is MDFITITSSNKTEEFALKQVAKQATSSLMYRLGKTIILASVCVEREPVGEDFLPLVVQFLEKSYAAGKIPGGFVKREGRAQDFEILTSRLIDRTLRPLFPKDYRYPTQITLMVLSHDVENDLQVSALNAASAALFLSHIAPIKSVSACRIARIGNEFIINPNTSLLNQSSLDLFVSGTKESLNMIEMRSLGQQLNALEEPLMLKALELAQKSLKETCTLYEEIFTPHQNELLFKESQGIIFNERLLDLLKNQYFDEIIKGIESSALSERENVFNEIARKISEAHSEFSLKEIELSLEKVKKTEIRCMIIKDKIRPDKRALEEVRPILIESDLLPMAHSSILFTRGQTQSLVVGVLGTDNDAQTHESLEHKAPIKERFMFHYNFPPFCVGEASSIGATSRRELGHGNLAKRALETSIKNKDQVIRLVSEILESNGSSSMASVCAGSLALYASGVEIYDLIAGVAMGMVSEGQDHAILSDISGLEDAEGDMDFKIAGNLEGITAMQMDTKMSGIQLEVLYQALLQAKKAREHILKIMHEAKEKIVINFSHLPTTEIFNVAPDKIVEIIGQGGRVIREIVEKFEVKIDLNKPSGEVKIMGNKERVLKTKEFILNYLHSLDQELEQYAIDEVLEAQVKRIVDFGAFLSLPKGGEGLLRKQNMDRCQVVLKEGDSIKCRVISFNKGKIALDLA.

Residues Asp-484 and Asp-490 each coordinate Mg(2+). One can recognise a KH domain in the interval 550–609 (PTTEIFNVAPDKIVEIIGQGGRVIREIVEKFEVKIDLNKPSGEVKIMGNKERVLKTKEFI). One can recognise an S1 motif domain in the interval 626–688 (DEVLEAQVKR…NKGKIALDLA (63 aa)).

The protein belongs to the polyribonucleotide nucleotidyltransferase family. It depends on Mg(2+) as a cofactor.

Its subcellular location is the cytoplasm. It catalyses the reaction RNA(n+1) + phosphate = RNA(n) + a ribonucleoside 5'-diphosphate. Involved in mRNA degradation. Catalyzes the phosphorolysis of single-stranded polyribonucleotides processively in the 3'- to 5'-direction. The polypeptide is Polyribonucleotide nucleotidyltransferase (Helicobacter pylori (strain Shi470)).